The chain runs to 425 residues: Meiotic recombination protein spo-11 (425 aa).

Positions 1–38 are disordered; that stretch reads MYEYSFNPNIDHEPGSVESQQSTIYSDSDDSDDSFLDD. A Topo IIA-type catalytic domain is found at 15–158; the sequence is GSVESQQSTI…LNILSCGRGI (144 aa). The span at 27-38 shows a compositional bias: acidic residues; it reads DSDDSDDSFLDD. The active-site O-(5'-phospho-DNA)-tyrosine intermediate is Tyr-119. Mg(2+)-binding residues include Glu-202 and Asp-255.

It belongs to the TOP6A family. Mg(2+) is required as a cofactor.

It localises to the nucleus. The catalysed reaction is ATP-dependent breakage, passage and rejoining of double-stranded DNA.. Required for meiotic recombination. Mediates DNA cleavage that forms the double-strand breaks (DSB) that initiate meiotic recombination. The protein is Meiotic recombination protein spo-11 (spo-11) of Caenorhabditis elegans.